The following is a 325-amino-acid chain: Ribosomal RNA small subunit methyltransferase C (325 aa).

This sequence belongs to the methyltransferase superfamily. RsmC family. Monomer.

The protein resides in the cytoplasm. It catalyses the reaction guanosine(1207) in 16S rRNA + S-adenosyl-L-methionine = N(2)-methylguanosine(1207) in 16S rRNA + S-adenosyl-L-homocysteine + H(+). Its function is as follows. Specifically methylates the guanine in position 1207 of 16S rRNA in the 30S particle. In Alcanivorax borkumensis (strain ATCC 700651 / DSM 11573 / NCIMB 13689 / SK2), this protein is Ribosomal RNA small subunit methyltransferase C.